Consider the following 295-residue polypeptide: 4-diphosphocytidyl-2-C-methyl-D-erythritol kinase (295 aa).

Lys-18 is a catalytic residue. Position 101–111 (101–111 (PMGGGIGGGSS)) interacts with ATP. The active site involves Asp-143.

Belongs to the GHMP kinase family. IspE subfamily.

The catalysed reaction is 4-CDP-2-C-methyl-D-erythritol + ATP = 4-CDP-2-C-methyl-D-erythritol 2-phosphate + ADP + H(+). Its pathway is isoprenoid biosynthesis; isopentenyl diphosphate biosynthesis via DXP pathway; isopentenyl diphosphate from 1-deoxy-D-xylulose 5-phosphate: step 3/6. Catalyzes the phosphorylation of the position 2 hydroxy group of 4-diphosphocytidyl-2C-methyl-D-erythritol. The sequence is that of 4-diphosphocytidyl-2-C-methyl-D-erythritol kinase from Vibrio vulnificus (strain YJ016).